The sequence spans 463 residues: MAFFTVALSLYYLLSRVSTQAPVVQNHSCNTADGGYQCFPNVSHVWGQYSPYFSIEQESAISEDVPHGCEVTFVQVLSRHGARYPTESKSKAYSGLIEAIQKNATSFWGQYAFLESYNYTLGADDLTIFGENQMVDSGAKFYRRYKNLARKNTPFIRASGSDRVVASAEKFINGFRKAQLHDHGSKRATPVVNVIIPEIDGFNNTLDHSTCVSFENDERADEIEANFTAIMGPPIRKRLENDLPGIKLTNENVIYLMDMCSFDTMARTAHGTELSPFCAIFTEKEWLQYDYLQSLSKYYGYGAGSPLGPAQGIGFTNELIARLTQSPVQDNTSTNHTLDSNPATFPLDRKLYADFSHDNSMISIFFAMGLYNGTQPLSMDSVESIQEMDGYAASWTVPFGARAYFELMQCEKKEPLVRVLVNDRVVPLHGCAVDKFGRCTLDDWVEGLNFARSGGNWKTCFTL.

An N-terminal signal peptide occupies residues 1–19 (MAFFTVALSLYYLLSRVST). The N-linked (GlcNAc...) asparagine glycan is linked to N26. Residues C29 and C38 are joined by a disulfide bond. Residue N41 is glycosylated (N-linked (GlcNAc...) asparagine). Q48, Y49, R79, H80, R83, and T86 together coordinate 1D-myo-inositol hexakisphosphate. 4 disulfides stabilise this stretch: C69/C410, C211/C460, C260/C278, and C431/C439. The active-site Nucleophile is the H80. Residues N103 and N118 are each glycosylated (N-linked (GlcNAc...) asparagine). R163 lines the 1D-myo-inositol hexakisphosphate pocket. N203 carries an N-linked (GlcNAc...) asparagine glycan. D207 lines the 1D-myo-inositol hexakisphosphate pocket. N226 carries an N-linked (GlcNAc...) asparagine glycan. Residue K297 participates in 1D-myo-inositol hexakisphosphate binding. 2 N-linked (GlcNAc...) asparagine glycosylation sites follow: N331 and N335. The 1D-myo-inositol hexakisphosphate site is built by H357 and D358. N372 carries an N-linked (GlcNAc...) asparagine glycan.

This sequence belongs to the histidine acid phosphatase family. As to quaternary structure, monomer. In terms of processing, seems to be cleaved into at least two pieces, most likely due to proteases in the supernatant. The N-terminal fragment, called phyB seems to retain phytase activity.

Its subcellular location is the secreted. It carries out the reaction 1D-myo-inositol hexakisphosphate + H2O = 1D-myo-inositol 1,2,4,5,6-pentakisphosphate + phosphate. It catalyses the reaction 1D-myo-inositol 1,2,4,5,6-pentakisphosphate + H2O = 1D-myo-inositol 1,2,5,6-tetrakisphosphate + phosphate. The catalysed reaction is 1D-myo-inositol 1,2,5,6-tetrakisphosphate + H2O = 1D-myo-inositol 1,2,6-trisphosphate + phosphate. The enzyme catalyses 1D-myo-inositol 1,2,6-trisphosphate + H2O = 1D-myo-inositol 1,2-bisphosphate + phosphate. It carries out the reaction 1D-myo-inositol 1,2-bisphosphate + H2O = 1D-myo-inositol 2-phosphate + phosphate. Catalyzes the phosphate monoester hydrolysis of phytic acid (myo-inositol hexakisphosphate), which results in the stepwise formation of myo-inositol pentakis-, tetrakis-, tris-, bis-, and monophosphates, as well as the liberation of inorganic phosphate. Myo-inositol 2-monophosphate is the end product. Has a broad substrate specificity and is also able to dephosphorylate other classic acid phosphatase substrates such as p-nitrophenyl phosphate, phenyl phosphate, fructose 1,6-bisphosphate, fructose 6-phosphate, glucose 6-phosphate, ribose 5-phosphate, alpha-glycerophosphate, beta-glycerophosphate, 3-phosphoglycerate, as well as ADP and ATP. This chain is Phytase A, found in Emericella nidulans (strain FGSC A4 / ATCC 38163 / CBS 112.46 / NRRL 194 / M139) (Aspergillus nidulans).